Consider the following 331-residue polypeptide: GTP 3',8-cyclase (331 aa).

Residues 6–231 form the Radical SAM core domain; that stretch reads PFGRTISYLR…TDIPFKTGGP (226 aa). Position 15 (Arg-15) interacts with GTP. Residues Cys-22 and Cys-26 each coordinate [4Fe-4S] cluster. Tyr-28 is a binding site for S-adenosyl-L-methionine. Residue Cys-29 participates in [4Fe-4S] cluster binding. GTP is bound at residue Arg-64. Gly-68 contributes to the S-adenosyl-L-methionine binding site. Position 98 (Thr-98) interacts with GTP. S-adenosyl-L-methionine is bound at residue Ser-122. Residue Lys-158 coordinates GTP. Met-192 contributes to the S-adenosyl-L-methionine binding site. [4Fe-4S] cluster-binding residues include Cys-255 and Cys-258. Residue 260–262 participates in GTP binding; sequence RVR. Cys-272 contributes to the [4Fe-4S] cluster binding site.

This sequence belongs to the radical SAM superfamily. MoaA family. Monomer and homodimer. The cofactor is [4Fe-4S] cluster.

It carries out the reaction GTP + AH2 + S-adenosyl-L-methionine = (8S)-3',8-cyclo-7,8-dihydroguanosine 5'-triphosphate + 5'-deoxyadenosine + L-methionine + A + H(+). Its pathway is cofactor biosynthesis; molybdopterin biosynthesis. Its function is as follows. Catalyzes the cyclization of GTP to (8S)-3',8-cyclo-7,8-dihydroguanosine 5'-triphosphate. The chain is GTP 3',8-cyclase from Mesorhizobium japonicum (strain LMG 29417 / CECT 9101 / MAFF 303099) (Mesorhizobium loti (strain MAFF 303099)).